The chain runs to 597 residues: Proline--tRNA ligase (597 aa).

Belongs to the class-II aminoacyl-tRNA synthetase family. ProS type 1 subfamily. Homodimer.

It localises to the cytoplasm. It catalyses the reaction tRNA(Pro) + L-proline + ATP = L-prolyl-tRNA(Pro) + AMP + diphosphate. Catalyzes the attachment of proline to tRNA(Pro) in a two-step reaction: proline is first activated by ATP to form Pro-AMP and then transferred to the acceptor end of tRNA(Pro). As ProRS can inadvertently accommodate and process non-cognate amino acids such as alanine and cysteine, to avoid such errors it has two additional distinct editing activities against alanine. One activity is designated as 'pretransfer' editing and involves the tRNA(Pro)-independent hydrolysis of activated Ala-AMP. The other activity is designated 'posttransfer' editing and involves deacylation of mischarged Ala-tRNA(Pro). The misacylated Cys-tRNA(Pro) is not edited by ProRS. This Bifidobacterium longum (strain NCC 2705) protein is Proline--tRNA ligase.